The primary structure comprises 420 residues: L-rhamnose isomerase (420 aa).

Mn(2+) contacts are provided by His-264, Asp-296, and Asp-298.

This sequence belongs to the rhamnose isomerase family. Requires Mn(2+) as cofactor.

The protein resides in the cytoplasm. The catalysed reaction is L-rhamnopyranose = L-rhamnulose. The protein operates within carbohydrate degradation; L-rhamnose degradation; glycerone phosphate from L-rhamnose: step 1/3. Catalyzes the interconversion of L-rhamnose and L-rhamnulose. The chain is L-rhamnose isomerase from Listeria innocua serovar 6a (strain ATCC BAA-680 / CLIP 11262).